The sequence spans 309 residues: UPF0276 protein RB0508 (309 aa).

It belongs to the UPF0276 family.

This is UPF0276 protein RB0508 from Rhizobium meliloti (strain 1021) (Ensifer meliloti).